The sequence spans 134 residues: Protein NrdI (134 aa).

Belongs to the NrdI family.

Probably involved in ribonucleotide reductase function. This Yersinia enterocolitica serotype O:8 / biotype 1B (strain NCTC 13174 / 8081) protein is Protein NrdI.